The sequence spans 545 residues: Glucose-6-phosphate isomerase (545 aa).

The Proton donor role is filled by Glu-351. Active-site residues include His-382 and Lys-510.

It belongs to the GPI family.

Its subcellular location is the cytoplasm. The catalysed reaction is alpha-D-glucose 6-phosphate = beta-D-fructose 6-phosphate. Its pathway is carbohydrate biosynthesis; gluconeogenesis. It functions in the pathway carbohydrate degradation; glycolysis; D-glyceraldehyde 3-phosphate and glycerone phosphate from D-glucose: step 2/4. Catalyzes the reversible isomerization of glucose-6-phosphate to fructose-6-phosphate. In Shewanella sediminis (strain HAW-EB3), this protein is Glucose-6-phosphate isomerase.